A 544-amino-acid chain; its full sequence is Chaperonin GroEL (544 aa).

Residues 29–32 (TLGP), Lys-50, 86–90 (DGTTT), Gly-414, 479–481 (DAA), and Asp-495 each bind ATP.

The protein belongs to the chaperonin (HSP60) family. In terms of assembly, forms a cylinder of 14 subunits composed of two heptameric rings stacked back-to-back. Interacts with the co-chaperonin GroES.

It is found in the cytoplasm. It catalyses the reaction ATP + H2O + a folded polypeptide = ADP + phosphate + an unfolded polypeptide.. In terms of biological role, together with its co-chaperonin GroES, plays an essential role in assisting protein folding. The GroEL-GroES system forms a nano-cage that allows encapsulation of the non-native substrate proteins and provides a physical environment optimized to promote and accelerate protein folding. This Treponema denticola (strain ATCC 35405 / DSM 14222 / CIP 103919 / JCM 8153 / KCTC 15104) protein is Chaperonin GroEL.